The chain runs to 291 residues: MVLLQVKRGDELIFLYETSVKEKTDTVLRELVALHNGQLKIQRVCMEIEELAEHGTMVPPEMIGLNEEQREELKLKDVWADKCIPSGGFTINKDPLLRRNGQQPTEAMQKVLAGAMNDAKAMVDRRLAKSSKTLTPKIVEEALNLLRGGVTIVYPMQLPPHDSIRMEFTNTEDLTGTQASKEVIEPSKAQFWFAGHQMLMGKLMSDYLGHNDKTKVVVKLNQIGEGPPGREAVISDPLRRQMMAEAYRRQEELKKLEQDDDDEYLNSSWADSGSLKRQAHGLENVRFRFRK.

The protein belongs to the CFAP298 family.

This Drosophila melanogaster (Fruit fly) protein is Cilia- and flagella-associated protein 298.